The sequence spans 527 residues: Coiled-coil domain-containing protein 148 (527 aa).

Coiled-coil stretches lie at residues 289–353 (LAKD…TEIK) and 401–438 (LEKR…VAVQ).

The protein is Coiled-coil domain-containing protein 148 (Ccdc148) of Mus musculus (Mouse).